The primary structure comprises 222 residues: MADEKKKVKKKKTKEEGGTSETASEAASEAATPAPAATPAPAASATGSKRASGGSRGSRKSKRAGSSVFSVFSQKQIAEFKEAFQLMDADKDGIIGKNDLRAAFDSVGKIANDKELDAMLGEASGPINFTQLLTLFANRMATSGANDEDEVVIAAFKTFDNDGLIDGDKFREMLMNFGDKFTMKEVDDAYDQMVIDDKNQIDTAALIEMLTGKGEEEEEEAA.

A disordered region spans residues 1 to 65 (MADEKKKVKK…RGSRKSKRAG (65 aa)). At Ala-2 the chain carries N-acetylalanine. Positions 19–53 (TSETASEAASEAATPAPAATPAPAASATGSKRASG) are enriched in low complexity. Phosphoserine occurs at positions 66 and 67. EF-hand domains lie at 75 to 110 (KQIA…VGKI), 147 to 180 (DEDE…FGDK), and 181 to 216 (FTMK…KGEE). Asp-88, Asp-90, Asp-92, and Asp-99 together coordinate Ca(2+).

In terms of assembly, myosin is a hexamer of 2 heavy chains and 4 light chains.

In Drosophila melanogaster (Fruit fly), this protein is Myosin regulatory light chain 2 (Mlc2).